A 485-amino-acid polypeptide reads, in one-letter code: Probable cobyric acid synthase (485 aa).

The 186-residue stretch at 250 to 435 (EIEIAVIRLP…LHGLFDNKNI (186 aa)) folds into the GATase cobBQ-type domain. Residue C328 is the Nucleophile of the active site. H427 is a catalytic residue.

The protein belongs to the CobB/CobQ family. CobQ subfamily.

The protein operates within cofactor biosynthesis; adenosylcobalamin biosynthesis. Functionally, catalyzes amidations at positions B, D, E, and G on adenosylcobyrinic A,C-diamide. NH(2) groups are provided by glutamine, and one molecule of ATP is hydrogenolyzed for each amidation. This is Probable cobyric acid synthase from Methanosarcina barkeri (strain Fusaro / DSM 804).